The following is a 512-amino-acid chain: Cytochrome P450 monooxygenase cheE (512 aa).

The chain crosses the membrane as a helical span at residues 5 to 27 (YFAAESSWSPYVILVLALAAMVA). Residues Asn-53, Asn-124, and Asn-168 are each glycosylated (N-linked (GlcNAc...) asparagine). Cys-455 is a binding site for heme. Asn-499 and Asn-508 each carry an N-linked (GlcNAc...) asparagine glycan.

This sequence belongs to the cytochrome P450 family. Heme serves as cofactor.

It localises to the membrane. It functions in the pathway secondary metabolite biosynthesis. Functionally, cytochrome P450 monooxygenase; part of the gene cluster that mediates the biosynthesis of chaetoglobosin A which has a unique inhibitory activity against actin polymerization in mammalian cells. Chaetoglobosin A and its intermediates are involved in the morphological differentiation of C.globosum. The first step of the pathway is the synthesis of prochaetoglobosin I via condensation of one acetyl-CoA, 8 malonyl-CoA, and a L-tryptophan molecule by the PKS-NRPS hybrid synthetase cheA, followed by reduction of backbone double bond to install desired geometry by the enoyl reductase cheB. Further multiple oxidation steps performed by the cytochrome P450 monooxygenases cheE and cheG, as well as by the FAD-linked oxidoreductase cheF, lead to the formation of chaetoglobosin A. Depending on the order of action of these reductases, distinct intermediates can be identified. Within the pathway, the cytochrome P450 monooxygenase cheE catalyzes a stereospecific epoxidation on prochaetoglobosin I, cytoglobosin D, and chaetoglobosin J intermediates. The FAD-linked oxidoreductase cheF performs dehydrogenation of the C-20 hydroxyl groups in the 20-dihyrochaetoglobosin A and cytoglobosin D intermediates. Finally, the cytochrome P450 monooxygenase cheG can catalyze the stereospecific dihydroxylation of prochaetoglobosin I and prochaetoglobosin IV at C-19 and C-20, respectively. The Diels-Alderase cheD may play a role in the post-PKS-NRPS biosynthetic steps catalyzing Diels-Alder cyclization. The protein is Cytochrome P450 monooxygenase cheE of Chaetomium globosum (strain ATCC 6205 / CBS 148.51 / DSM 1962 / NBRC 6347 / NRRL 1970) (Soil fungus).